The sequence spans 457 residues: Oxygen-independent coproporphyrinogen III oxidase (457 aa).

The 233-residue stretch at 47–279 (LKNPMPLSLY…EILESLISFL (233 aa)) folds into the Radical SAM core domain. Tyr-56 is an S-adenosyl-L-methionine binding site. Residues Cys-62 and Cys-66 each coordinate [4Fe-4S] cluster. Position 68 (Phe-68) interacts with S-adenosyl-L-methionine. Cys-69 contacts [4Fe-4S] cluster. S-adenosyl-L-methionine is bound by residues Gly-113, 114–115 (GT), Glu-147, Gln-174, Arg-186, Asp-211, Ala-245, and Ile-331.

This sequence belongs to the anaerobic coproporphyrinogen-III oxidase family. Monomer. The cofactor is [4Fe-4S] cluster.

It is found in the cytoplasm. It carries out the reaction coproporphyrinogen III + 2 S-adenosyl-L-methionine = protoporphyrinogen IX + 2 5'-deoxyadenosine + 2 L-methionine + 2 CO2. The protein operates within porphyrin-containing compound metabolism; protoporphyrin-IX biosynthesis; protoporphyrinogen-IX from coproporphyrinogen-III (AdoMet route): step 1/1. Involved in the heme biosynthesis. Catalyzes the anaerobic oxidative decarboxylation of propionate groups of rings A and B of coproporphyrinogen III to yield the vinyl groups in protoporphyrinogen IX. This Helicobacter pylori (strain J99 / ATCC 700824) (Campylobacter pylori J99) protein is Oxygen-independent coproporphyrinogen III oxidase (hemN).